The sequence spans 45 residues: Photosystem II reaction center protein K (45 aa).

Positions 1–8 (MEGILFLA) are excised as a propeptide. The chain crosses the membrane as a helical span at residues 24–44 (APVIPVFFLLLAFVWQAAVGF).

Belongs to the PsbK family. PSII is composed of 1 copy each of membrane proteins PsbA, PsbB, PsbC, PsbD, PsbE, PsbF, PsbH, PsbI, PsbJ, PsbK, PsbL, PsbM, PsbT, PsbX, PsbY, PsbZ, Psb30/Ycf12, at least 3 peripheral proteins of the oxygen-evolving complex and a large number of cofactors. It forms dimeric complexes.

The protein resides in the plastid. Its subcellular location is the chloroplast thylakoid membrane. One of the components of the core complex of photosystem II (PSII). PSII is a light-driven water:plastoquinone oxidoreductase that uses light energy to abstract electrons from H(2)O, generating O(2) and a proton gradient subsequently used for ATP formation. It consists of a core antenna complex that captures photons, and an electron transfer chain that converts photonic excitation into a charge separation. The protein is Photosystem II reaction center protein K of Guillardia theta (Cryptophyte).